The primary structure comprises 288 residues: Release factor glutamine methyltransferase (288 aa).

S-adenosyl-L-methionine-binding residues include D142 and N186. 186–189 contributes to the substrate binding site; that stretch reads NPPY.

It belongs to the protein N5-glutamine methyltransferase family. PrmC subfamily.

It catalyses the reaction L-glutaminyl-[peptide chain release factor] + S-adenosyl-L-methionine = N(5)-methyl-L-glutaminyl-[peptide chain release factor] + S-adenosyl-L-homocysteine + H(+). In terms of biological role, methylates the class 1 translation termination release factors RF1/PrfA and RF2/PrfB on the glutamine residue of the universally conserved GGQ motif. This chain is Release factor glutamine methyltransferase, found in Mycobacterium leprae (strain TN).